A 368-amino-acid polypeptide reads, in one-letter code: Methionine import ATP-binding protein MetN (368 aa).

A compositionally biased stretch (polar residues) spans 1-14 (MASDAQPSVDQPSA). Residues 1–27 (MASDAQPSVDQPSAGTPGATGNSTGTT) form a disordered region. Residues 15-27 (GTPGATGNSTGTT) show a composition bias toward low complexity. The region spanning 31–270 (IVFRDVTKIF…PQTKTAANFV (240 aa)) is the ABC transporter domain. 67-74 (GYSGAGKS) lines the ATP pocket.

This sequence belongs to the ABC transporter superfamily. Methionine importer (TC 3.A.1.24) family. As to quaternary structure, the complex is composed of two ATP-binding proteins (MetN), two transmembrane proteins (MetI) and a solute-binding protein (MetQ).

Its subcellular location is the cell membrane. The catalysed reaction is L-methionine(out) + ATP + H2O = L-methionine(in) + ADP + phosphate + H(+). It carries out the reaction D-methionine(out) + ATP + H2O = D-methionine(in) + ADP + phosphate + H(+). Part of the ABC transporter complex MetNIQ involved in methionine import. Responsible for energy coupling to the transport system. This chain is Methionine import ATP-binding protein MetN, found in Corynebacterium jeikeium (strain K411).